The following is a 61-amino-acid chain: Rubredoxin 3 (61 aa).

A Rubredoxin-like domain is found at 1 to 53; the sequence is MSSYRCPVCEYVYDESKGAPREGFPAGTPWDAVPDDWCCPDCGVREKLDFEPM. Fe cation-binding residues include Cys6, Cys9, Cys39, and Cys42.

Belongs to the rubredoxin family. Fe(3+) serves as cofactor.

Its function is as follows. Involved in the hydrocarbon hydroxylating system, which transfers electrons from NADH to rubredoxin reductase and then through rubredoxin to alkane 1 monooxygenase. The sequence is that of Rubredoxin 3 (rubA3) from Rhodococcus erythropolis (Arthrobacter picolinophilus).